Here is a 300-residue protein sequence, read N- to C-terminus: GTPase Era (300 aa).

The region spanning 8–176 is the Era-type G domain; that stretch reads RCGYVAIVGR…EAQIAKHLPE (169 aa). Residues 16–23 form a G1 region; sequence GRPNVGKS. Position 16–23 (16–23) interacts with GTP; it reads GRPNVGKS. Residues 42-46 are G2; sequence QTTRH. Positions 63 to 66 are G3; the sequence is DTPG. Residues 63–67 and 125–128 each bind GTP; these read DTPGM and NKTD. Residues 125–128 form a G4 region; that stretch reads NKTD. The interval 155 to 157 is G5; it reads ISA. In terms of domain architecture, KH type-2 spans 199–283; that stretch reads VREKIMRQLG…MLNLWVKVKG (85 aa).

This sequence belongs to the TRAFAC class TrmE-Era-EngA-EngB-Septin-like GTPase superfamily. Era GTPase family. In terms of assembly, monomer.

The protein localises to the cytoplasm. It is found in the cell inner membrane. In terms of biological role, an essential GTPase that binds both GDP and GTP, with rapid nucleotide exchange. Plays a role in 16S rRNA processing and 30S ribosomal subunit biogenesis and possibly also in cell cycle regulation and energy metabolism. This chain is GTPase Era, found in Pseudomonas entomophila (strain L48).